A 484-amino-acid polypeptide reads, in one-letter code: Probable cytosol aminopeptidase (484 aa).

Residues Lys-256 and Asp-261 each contribute to the Mn(2+) site. Residue Lys-268 is part of the active site. Mn(2+)-binding residues include Asp-279, Asp-338, and Glu-340. Arg-342 is an active-site residue.

Belongs to the peptidase M17 family. Mn(2+) serves as cofactor.

The protein resides in the cytoplasm. It carries out the reaction Release of an N-terminal amino acid, Xaa-|-Yaa-, in which Xaa is preferably Leu, but may be other amino acids including Pro although not Arg or Lys, and Yaa may be Pro. Amino acid amides and methyl esters are also readily hydrolyzed, but rates on arylamides are exceedingly low.. The enzyme catalyses Release of an N-terminal amino acid, preferentially leucine, but not glutamic or aspartic acids.. In terms of biological role, presumably involved in the processing and regular turnover of intracellular proteins. Catalyzes the removal of unsubstituted N-terminal amino acids from various peptides. This Methylibium petroleiphilum (strain ATCC BAA-1232 / LMG 22953 / PM1) protein is Probable cytosol aminopeptidase.